The primary structure comprises 394 residues: Immune-associated nucleotide-binding protein 12 (394 aa).

In terms of domain architecture, AIG1-type G spans 45 to 251; that stretch reads KPARTLLLVG…YMADLSHEIR (207 aa). Positions 54-61 are G1; sequence GRSGNGKS. GTP-binding positions include 54–62 and Ser75; that span reads GRSGNGKSA. The interval 81-85 is G2; it reads GVTTA. The G3 stretch occupies residues 103–106; the sequence is DTPG. Residues 173–176 are G4; sequence TNED. The segment at 210–212 is G5; sequence RNR. GTP is bound at residue Asn211. Positions 289–387 form a coiled coil; sequence NQQLRQMMER…KQMATDLQKS (99 aa).

The protein belongs to the TRAFAC class TrmE-Era-EngA-EngB-Septin-like GTPase superfamily. AIG1/Toc34/Toc159-like paraseptin GTPase family. IAN subfamily.

The protein is Immune-associated nucleotide-binding protein 12 of Arabidopsis thaliana (Mouse-ear cress).